The chain runs to 475 residues: Probable UDP-N-acetylglucosamine pyrophosphorylase (475 aa).

A Substrate binding motif is present at residues L103 to G106. Residues L103–G106, K117, Q194, and G220 each bind UTP. N221 contacts substrate. Residue D251 participates in UTP binding. Positions E301–Y302 match the Substrate binding motif. A UTP-binding site is contributed by K378. S405 bears the Phosphoserine mark. K410 contributes to the substrate binding site.

The protein belongs to the UDPGP type 1 family.

It localises to the cytoplasm. It is found in the nucleus. It carries out the reaction N-acetyl-alpha-D-glucosamine 1-phosphate + UTP + H(+) = UDP-N-acetyl-alpha-D-glucosamine + diphosphate. It functions in the pathway nucleotide-sugar biosynthesis; UDP-N-acetyl-alpha-D-glucosamine biosynthesis; UDP-N-acetyl-alpha-D-glucosamine from N-acetyl-alpha-D-glucosamine 1-phosphate: step 1/1. This is Probable UDP-N-acetylglucosamine pyrophosphorylase (uap1) from Schizosaccharomyces pombe (strain 972 / ATCC 24843) (Fission yeast).